Reading from the N-terminus, the 146-residue chain is Neuropeptide Y receptor type 2 (146 aa).

Topologically, residues 1–8 (KMGPVLCH) are extracellular. Cysteine 7 and cysteine 87 form a disulfide bridge. A helical transmembrane segment spans residues 9–29 (LVPYAQGLAVQVSTITLTVIA). Residues 30 to 49 (LDRHRCIVYHLESKISKQIS) lie on the Cytoplasmic side of the membrane. A helical transmembrane segment spans residues 50 to 70 (FLIIGLAWGVSALLASPLAIF). Over 71–100 (REYSLIEIIPDFEIVACTEKWPGEEKGIYG) the chain is Extracellular. A helical membrane pass occupies residues 101-121 (TVYSLLSLLILYVLPLGIISF). The Cytoplasmic portion of the chain corresponds to 122–146 (SYARIWSKLKNHVSPGAAHDHYHQR).

Belongs to the G-protein coupled receptor 1 family.

The protein localises to the cell membrane. In terms of biological role, receptor for neuropeptide Y and peptide YY. The protein is Neuropeptide Y receptor type 2 (NPY2R) of Ovis aries (Sheep).